The primary structure comprises 491 residues: AP-2 complex subunit mu (491 aa).

Residues S179, S180, and S181 each carry the phosphoserine modification. The region spanning 209-490 (KDEVFLYVNE…ISKAGSYEVR (282 aa)) is the MHD domain.

It belongs to the adaptor complexes medium subunit family. Adaptor protein complex 2 (AP-2) is a heterotetramer composed of two large adaptins (alpha-type subunit APL3 and beta-type subunit APL1), a medium chain (mu-type subunit APM4) and a small adaptin (sigma-type subunit APS2).

It localises to the membrane. It is found in the clathrin-coated pit. The protein localises to the cytoplasmic vesicle. The protein resides in the clathrin-coated vesicle membrane. Component of the adaptor complexes which link clathrin to receptors in coated vesicles. Clathrin-associated protein complexes are believed to interact with the cytoplasmic tails of membrane proteins, leading to their selection and concentration. This is AP-2 complex subunit mu (APM4) from Saccharomyces cerevisiae (strain ATCC 204508 / S288c) (Baker's yeast).